Consider the following 248-residue polypeptide: Granzyme-like protein 1 (248 aa).

Residues 1 to 18 form the signal peptide; the sequence is MNLLLLLLTVSLAPTTEA. Residues 19–20 constitute a propeptide, activation peptide; that stretch reads AE. The region spanning 21–246 is the Peptidase S1 domain; that stretch reads IIGGHEADPH…FLSWIEETMK (226 aa). C50 and C66 are joined by a disulfide. Residue H65 is the Charge relay system of the active site. Residue N72 is glycosylated (N-linked (GlcNAc...) asparagine). D109 (charge relay system) is an active-site residue. 2 disulfides stabilise this stretch: C143-C210 and C174-C189. S204 (charge relay system) is an active-site residue.

This sequence belongs to the peptidase S1 family. Granzyme subfamily. Duodenum.

Its function is as follows. This enzyme is necessary for target cell lysis in cell-mediated immune responses. The polypeptide is Granzyme-like protein 1 (Rattus norvegicus (Rat)).